The primary structure comprises 345 residues: UPF0324 membrane protein CTC_01844 (345 aa).

The next 10 helical transmembrane spans lie at 7–24 (YSVG…SGFI), 28–50 (IPYR…NPIV), 70–87 (LAII…VLEV), 91–113 (SLIV…GKLF), 120–142 (SGLI…SPVI), 152–174 (AISA…GKYF), 181–203 (YGLW…YAFS), 209–231 (FSVI…FSYI), 261–283 (IFPW…IIPN), and 316–338 (SGFA…SFLV).

The protein belongs to the UPF0324 family.

The protein localises to the cell membrane. This is UPF0324 membrane protein CTC_01844 from Clostridium tetani (strain Massachusetts / E88).